The sequence spans 225 residues: Potassium-transporting ATPase KdpC subunit (225 aa).

A helical transmembrane segment spans residues 18–38 (ALLVLTVVTGIVYPLVVTGVA). The segment at 134-161 (NSVPGHPVRPEDVPADAVTSSGSGLDPD) is disordered.

It belongs to the KdpC family. In terms of assembly, the system is composed of three essential subunits: KdpA, KdpB and KdpC.

It localises to the cell membrane. Part of the high-affinity ATP-driven potassium transport (or Kdp) system, which catalyzes the hydrolysis of ATP coupled with the electrogenic transport of potassium into the cytoplasm. This subunit acts as a catalytic chaperone that increases the ATP-binding affinity of the ATP-hydrolyzing subunit KdpB by the formation of a transient KdpB/KdpC/ATP ternary complex. The chain is Potassium-transporting ATPase KdpC subunit from Streptomyces coelicolor (strain ATCC BAA-471 / A3(2) / M145).